The following is a 764-amino-acid chain: Hemocyte protein-glutamine gamma-glutamyltransferase (764 aa).

Catalysis depends on residues cysteine 343, histidine 402, and aspartate 425. The Ca(2+) site is built by asparagine 465, aspartate 467, glutamate 522, and glutamate 527.

This sequence belongs to the transglutaminase superfamily. Transglutaminase family. Ca(2+) is required as a cofactor. In terms of tissue distribution, mainly expressed in hemocytes, hepatopancreas, and gastric tissues. On the other hand nothing was detected in the heart, intestine and muscle.

It localises to the membrane. The enzyme catalyses L-glutaminyl-[protein] + L-lysyl-[protein] = [protein]-L-lysyl-N(6)-5-L-glutamyl-[protein] + NH4(+). Functionally, catalyzes the cross-linking of proteins and the conjugation of polyamines to proteins. The protein is Hemocyte protein-glutamine gamma-glutamyltransferase of Tachypleus tridentatus (Japanese horseshoe crab).